The chain runs to 397 residues: Serpin-Z7 (397 aa).

Position 2 is an N-acetylalanine (alanine 2). An RCL region spans residues 344 to 368; that stretch reads GTKAGAATGDVIVDRSLPIRMDFVA.

This sequence belongs to the serpin family. As to expression, highly expressed in endosperm, at intermediate level in embryo and at lower levels in roots.

Inhibits chymotrypsin in vitro. In Hordeum vulgare (Barley), this protein is Serpin-Z7 (PAZ7).